We begin with the raw amino-acid sequence, 927 residues long: Non-lysosomal glucosylceramidase (927 aa).

The interval 32–62 (EETGGTKDVQVTDCKSPEDSRPPKETDCCNP) is disordered. A compositionally biased stretch (basic and acidic residues) spans 46 to 58 (KSPEDSRPPKETD).

Belongs to the non-lysosomal glucosylceramidase family. As to expression, widely expressed. Mainly expressed in brain, heart, skeletal muscle, kidney and placenta and expressed at lower levels in liver, spleen, small intestine and lung. Detectable in colon, thymus and peripheral blood leukocytes.

The protein resides in the endoplasmic reticulum membrane. The protein localises to the golgi apparatus membrane. The catalysed reaction is a beta-D-glucosyl-(1&lt;-&gt;1')-N-acylsphing-4-enine + H2O = an N-acylsphing-4-enine + D-glucose. The enzyme catalyses a beta-D-galactosyl-(1&lt;-&gt;1')-N-acylsphing-4-enine + H2O = an N-acylsphing-4-enine + D-galactose. It carries out the reaction beta-D-glucosyl-(1-&gt;3)-O-lithocholate + H2O = lithocholate + D-glucose. It catalyses the reaction beta-D-glucosyl-(1-&gt;3)-O-chenodeoxycholate + H2O = chenodeoxycholate + D-glucose. The catalysed reaction is a di-trans,poly-cis-dolichyl beta-D-glucosyl phosphate + chenodeoxycholate = beta-D-glucosyl-(1-&gt;3)-O-chenodeoxycholate + a di-trans,poly-cis-dolichyl phosphate + H(+). The enzyme catalyses octyl beta-D-glucose + chenodeoxycholate = beta-D-glucosyl-(1-&gt;3)-O-chenodeoxycholate + octan-1-ol. It carries out the reaction cholesteryl 3-beta-D-glucoside + H2O = cholesterol + D-glucose. It catalyses the reaction a beta-D-glucosyl-(1&lt;-&gt;1')-N-acylsphing-4-enine + cholesterol = cholesteryl 3-beta-D-glucoside + an N-acylsphing-4-enine. The catalysed reaction is beta-D-glucosyl-N-(9Z-octadecenoyl)-sphing-4E-enine + cholesterol = N-(9Z-octadecenoyl)-sphing-4-enine + cholesteryl 3-beta-D-glucoside. The enzyme catalyses a beta-D-galactosyl-(1&lt;-&gt;1')-N-acylsphing-4-enine + cholesterol = cholesteryl 3-beta-D-galactoside + an N-acylsphing-4-enine. It carries out the reaction 1-(beta-D-galactosyl)-N-dodecanoylsphing-4-enine + cholesterol = cholesteryl 3-beta-D-galactoside + N-dodecanoylsphing-4-enine. It participates in lipid metabolism; sphingolipid metabolism. Its pathway is steroid metabolism; cholesterol metabolism. Its activity is regulated as follows. Inhibited by AMP-DMN/N -((5-adamantane-1-yl-methoxy)pentyl)-deoxynojirimycin. Activated by Mn(2+), Co(2+) and Mg(2+) and inhibited by Zn(2+). Enzymatic activity is dependent on membrane association and requires the presence of lipids. The membrane-associated enzyme is not inhibited by condutiriol B epoxide and bromocondutiriol B epoxide. Non-lysosomal glucosylceramidase that catalyzes the hydrolysis of glucosylceramides/GlcCers (such as beta-D-glucosyl-(1&lt;-&gt;1')-N-acylsphing-4-enine) to free glucose and ceramides (such as N-acylsphing-4-enine). GlcCers are membrane glycosphingolipids that have a wide intracellular distribution. They are the main precursors of more complex glycosphingolipids that play a role in cellular growth, differentiation, adhesion, signaling, cytoskeletal dynamics and membrane properties. Involved in the transglucosylation of cholesterol, transfers glucose from GlcCer to cholesterol, thereby modifying its water solubility and biological properties. Under specific conditions, may catalyze the reverse reaction, transferring glucose from cholesteryl-3-beta-D-glucoside to ceramide (such as N-acylsphing-4-enine). May play a role in the metabolism of bile acids. Able to hydrolyze bile acid 3-O-glucosides as well as to produce bile acid-glucose conjugates thanks to a bile acid glucosyl transferase activity. Catalyzes the hydrolysis of galactosylceramides/GalCers (such as beta-D-galactosyl-(1&lt;-&gt;1')-N-acylsphing-4-enine), as well as the galactosyl transfer between GalCers and cholesterol in vitro with lower activity compared with their activity against GlcCers. This chain is Non-lysosomal glucosylceramidase, found in Homo sapiens (Human).